Reading from the N-terminus, the 149-residue chain is Large ribosomal subunit protein eL8 (149 aa).

This sequence belongs to the eukaryotic ribosomal protein eL8 family. In terms of assembly, part of the 50S ribosomal subunit. Probably part of the RNase P complex.

It is found in the cytoplasm. Its function is as follows. Multifunctional RNA-binding protein that recognizes the K-turn motif in ribosomal RNA, the RNA component of RNase P, box H/ACA, box C/D and box C'/D' sRNAs. This Pyrobaculum calidifontis (strain DSM 21063 / JCM 11548 / VA1) protein is Large ribosomal subunit protein eL8.